The sequence spans 259 residues: uncharacterized protein (259 aa).

An N-acetyltransferase domain is found at Gln110–Thr259.

Its function is as follows. May be involved in maturation of the outermost layer of the spore. This is an uncharacterized protein from Bacillus subtilis (strain 168).